The primary structure comprises 489 residues: FAD-containing monooxygenase EthA (489 aa).

FAD is bound by residues Ser15, Glu36, 44–47 (TWDL), Asp56, and Val104. NADP(+) is bound at residue 54 to 56 (RSD). NADP(+)-binding positions include 183–189 (SGATAVT) and 207–208 (RS).

This sequence belongs to the FAD-binding monooxygenase family. FAD serves as cofactor.

It is found in the cell membrane. The enzyme catalyses ethionamide + NADPH + O2 + H(+) = ethionamide S-oxide + NADP(+) + H2O. Its function is as follows. Monooxygenase able to convert a wide range of ketones to the corresponding esters or lactones via a Baeyer-Villiger oxidation reaction. Can act on long-chain aliphatic ketones (2-hexanone to 2-dodecanone) and on aromatic ketones (phenylacetone and benzylacetone). Is also able to catalyze enantioselective sulfoxidation of methyl-p-tolylsulfide. In vivo, likely functions as a BVMO, but the exact nature of the physiological substrate(s) remains to be established. In terms of biological role, is responsible for the activation of several thiocarbamide-containing pro-drugs, such as ethionamide (ETH), isoxyl (ISO) and thiacetazone (TAC), into reactive species. The protein is FAD-containing monooxygenase EthA (ethA) of Mycobacterium bovis (strain ATCC BAA-935 / AF2122/97).